The sequence spans 73 residues: Putative beta-defensin 108A (73 aa).

A signal peptide spans 1–22 (MRIAVLFFTIFFFMSQVLPAKG). 3 disulfides stabilise this stretch: C28–C55, C35–C49, and C39–C56.

It belongs to the beta-defensin family.

Its subcellular location is the secreted. Has antibacterial activity. The protein is Putative beta-defensin 108A of Homo sapiens (Human).